Reading from the N-terminus, the 652-residue chain is RNA-binding E3 ubiquitin-protein ligase MEX3C (652 aa).

Disordered regions lie at residues 15–39 (AAPA…ELEG) and 80–136 (QARR…EDRP). Positions 18–33 (APLPQPPPLPPPPPAG) are enriched in pro residues. The span at 101–134 (AELELEVDEEEGEEAELDGELLEEEELEEAEEED) shows a compositional bias: acidic residues. 2 consecutive KH domains span residues 225 to 286 (TTEC…KREI) and 319 to 380 (QTTV…REEI). Disordered regions lie at residues 429–448 (ARMM…SGST) and 506–566 (FEPV…HVGL). Residues 430–448 (RMMSNYRNDSSSSLGSGST) are compositionally biased toward low complexity. Polar residues predominate over residues 519-537 (PSGNMKTQRRGSQPSTPRL). Phosphoserine occurs at positions 530 and 538. Over residues 544–555 (SIEHPLARRVRS) the composition is skewed to basic and acidic residues. The segment at 601 to 641 (CVICFENEVIAALVPCGHNLFCMECANKICEKRTPSCPVCQ) adopts an RING-type zinc-finger fold.

Interacts with USP7, which antagonizes the ability to degrade mRNA. Post-translationally, phosphorylated.

It localises to the nucleus. The protein localises to the cytoplasm. It carries out the reaction S-ubiquitinyl-[E2 ubiquitin-conjugating enzyme]-L-cysteine + [acceptor protein]-L-lysine = [E2 ubiquitin-conjugating enzyme]-L-cysteine + N(6)-ubiquitinyl-[acceptor protein]-L-lysine.. Its function is as follows. RNA-binding protein. May be involved in post-transcriptional regulatory mechanisms, modulating levels of some mRNAs by promoting their degradation in a way involving ubiquitin ligase activity. May act as suppressor of replication stress and chromosome missegregation. The chain is RNA-binding E3 ubiquitin-protein ligase MEX3C (Mex3c) from Mus musculus (Mouse).